The sequence spans 131 residues: uncharacterized protein (131 aa).

A disordered region spans residues 101–131 (SWWPPSGVVRGGPSSWPPSGVAEPREALGLP).

This is an uncharacterized protein from Homo sapiens (Human).